We begin with the raw amino-acid sequence, 171 residues long: Large ribosomal subunit protein uL15 (171 aa).

The segment covering 1–10 has biased composition (polar residues); that stretch reads MKLNEISDNN. Disordered regions lie at residues 1–44 and 150–171; these read MKLN…RSGV and LPEAQPSEQEKKAARREANKAK. The span at 21-35 shows a compositional bias: gly residues; that stretch reads RGIGSGKGKTAGRGQ. Residues 157–171 are compositionally biased toward basic and acidic residues; it reads EQEKKAARREANKAK.

It belongs to the universal ribosomal protein uL15 family. As to quaternary structure, part of the 50S ribosomal subunit.

In terms of biological role, binds to the 23S rRNA. The polypeptide is Large ribosomal subunit protein uL15 (Novosphingobium aromaticivorans (strain ATCC 700278 / DSM 12444 / CCUG 56034 / CIP 105152 / NBRC 16084 / F199)).